The chain runs to 499 residues: NAD(P)H-quinone oxidoreductase chain 4, chloroplastic (499 aa).

14 helical membrane passes run 4–24, 31–51, 87–107, 113–133, 134–154, 167–187, 211–231, 242–262, 274–294, 310–330, 331–351, 385–405, 416–436, and 462–482; these read FPWL…IPFL, IIRW…TYIF, IGLI…AWPV, LFYF…ASQD, ILLF…LLAM, FILY…IMAF, IIIY…IPFH, HYST…YGLI, SFFA…AALT, VSHM…GLNG, AILQ…LAGI, SLAL…LGVI, IIII…LLSM, and IFIL…PNFV.

Belongs to the complex I subunit 4 family.

The protein resides in the plastid. It localises to the chloroplast thylakoid membrane. It carries out the reaction a plastoquinone + NADH + (n+1) H(+)(in) = a plastoquinol + NAD(+) + n H(+)(out). The catalysed reaction is a plastoquinone + NADPH + (n+1) H(+)(in) = a plastoquinol + NADP(+) + n H(+)(out). In Marchantia polymorpha (Common liverwort), this protein is NAD(P)H-quinone oxidoreductase chain 4, chloroplastic (ndhD).